A 346-amino-acid chain; its full sequence is Short-wave-sensitive opsin 1 (346 aa).

The Extracellular segment spans residues 1-31 (MSGEDDFYLFQNISSVGPWDGPQYHLAPVWA). Asparagine 12 carries N-linked (GlcNAc...) asparagine glycosylation. Residues 32–56 (FRLQAAFMGFVFFVGTPLNAIVLVA) traverse the membrane as a helical segment. Residues 57–68 (TLHYKKLRQPLN) are Cytoplasmic-facing. Residues 69-94 (YILVNVSLGGFLFCIFSVFTVFIASC) form a helical membrane-spanning segment. The Extracellular portion of the chain corresponds to 95–108 (HGYFLFGRHVCALE). A disulfide bridge connects residues cysteine 105 and cysteine 182. The helical transmembrane segment at 109 to 128 (AFLGSVAGLVTGWSLAFLAF) threads the bilayer. The Cytoplasmic portion of the chain corresponds to 129–147 (ERYVVICKPFGSIRFNSKH). Residues 148-171 (ALMVVLATWIIGIGVSIPPFFGWS) form a helical membrane-spanning segment. Residues 172–197 (RFIPEGLQCSCGPDWYTVGTKYRSEY) lie on the Extracellular side of the membrane. A helical membrane pass occupies residues 198–225 (YTWFLFIFCFIIPLSLICFSYSQLLRTL). Over 226-247 (RAVAAQQQESATTQKAEREVSH) the chain is Cytoplasmic. Residues 248–271 (MVVVMVGSFCLCYVPYAALAMYMV) traverse the membrane as a helical segment. The Extracellular portion of the chain corresponds to 272–279 (NNRNHGLD). Residues 280–304 (LRLVTIPAFFSKSSCVYNPIIYCFM) traverse the membrane as a helical segment. Lysine 291 carries the N6-(retinylidene)lysine modification. The Cytoplasmic segment spans residues 305-346 (NKQFRACILEMVCRKPMADESDVSGSQKTEVSTVSSSKVGPH). The disordered stretch occupies residues 324 to 346 (ESDVSGSQKTEVSTVSSSKVGPH). Residues 330–346 (SQKTEVSTVSSSKVGPH) are compositionally biased toward low complexity.

It belongs to the G-protein coupled receptor 1 family. Opsin subfamily. Phosphorylated on some or all of the serine and threonine residues present in the C-terminal region. In terms of tissue distribution, expressed in the inner and outer segments of cone photoreceptor cells in the retina (at protein level).

It localises to the cell membrane. It is found in the photoreceptor inner segment. Its subcellular location is the cell projection. The protein localises to the cilium. The protein resides in the photoreceptor outer segment. It localises to the cytoplasm. It is found in the perinuclear region. In terms of biological role, visual pigments are the light-absorbing molecules that mediate vision. They consist of an apoprotein, opsin, covalently linked to cis-retinal. Required for the maintenance of cone outer segment organization in the ventral retina, but not essential for the maintenance of functioning cone photoreceptors. Involved in ensuring correct abundance and localization of retinal membrane proteins. May increase spectral sensitivity in dim light. The polypeptide is Short-wave-sensitive opsin 1 (Opn1sw) (Mus musculus (Mouse)).